An 83-amino-acid chain; its full sequence is Consomatin Rs1 (83 aa).

The N-terminal stretch at 1–22 (MQTAYWVMVMMMVWITAPLSEG) is a signal peptide. The propeptide occupies 23–55 (GKLNNVIRGLVPDDVTPKRISQSLISRRRFDSR). A disulfide bond links C62 and C67. W64 is modified (D-tryptophan). A 4-hydroxyproline modification is found at P68. A propeptide spanning residues 71 to 83 (LHGDNYDLKEKDK) is cleaved from the precursor.

This sequence belongs to the conotoxin C superfamily. Consomatin family. In terms of tissue distribution, expressed by the venom duct.

The protein localises to the secreted. In terms of biological role, moderately activates human somatostatin receptors (SSTR) with a preferential activation of SSTR1 and SSTR4. In vivo, does not cause behavioral changes in mice within a few minutes of intracranial injection, but causes a progressive loss of movement thereafter. Four to five hours after injection, mice recover, even with the highest dose tested. Shows antinociception and antihyperalgesia activities in two mouse models of acute pain, most probably by acting outside the central nervous system. The chain is Consomatin Rs1 from Conus raulsilvai (Sea snail).